Here is a 198-residue protein sequence, read N- to C-terminus: 3-isopropylmalate dehydratase small subunit (198 aa).

It belongs to the LeuD family. LeuD type 1 subfamily. Heterodimer of LeuC and LeuD.

It carries out the reaction (2R,3S)-3-isopropylmalate = (2S)-2-isopropylmalate. It participates in amino-acid biosynthesis; L-leucine biosynthesis; L-leucine from 3-methyl-2-oxobutanoate: step 2/4. Its function is as follows. Catalyzes the isomerization between 2-isopropylmalate and 3-isopropylmalate, via the formation of 2-isopropylmaleate. This is 3-isopropylmalate dehydratase small subunit from Colwellia psychrerythraea (strain 34H / ATCC BAA-681) (Vibrio psychroerythus).